The chain runs to 202 residues: Ribonuclease HII (202 aa).

In terms of domain architecture, RNase H type-2 spans 13 to 202 (KIEAGLDEAG…HFKPKQLDLF (190 aa)). A divalent metal cation contacts are provided by Asp-19, Glu-20, and Asp-112.

Belongs to the RNase HII family. Mn(2+) serves as cofactor. The cofactor is Mg(2+).

Its subcellular location is the cytoplasm. The enzyme catalyses Endonucleolytic cleavage to 5'-phosphomonoester.. Endonuclease that specifically degrades the RNA of RNA-DNA hybrids. This Cytophaga hutchinsonii (strain ATCC 33406 / DSM 1761 / CIP 103989 / NBRC 15051 / NCIMB 9469 / D465) protein is Ribonuclease HII.